Reading from the N-terminus, the 277-residue chain is Large ribosomal subunit protein uL2 (277 aa).

A disordered region spans residues 227–277 (VMNPVDHPHGGGEGRTSGGRHPVTPWGVPTKGKKTRSKTKASDRLIMRRRK). Over residues 266–277 (KASDRLIMRRRK) the composition is skewed to basic and acidic residues.

This sequence belongs to the universal ribosomal protein uL2 family. As to quaternary structure, part of the 50S ribosomal subunit. Forms a bridge to the 30S subunit in the 70S ribosome.

Functionally, one of the primary rRNA binding proteins. Required for association of the 30S and 50S subunits to form the 70S ribosome, for tRNA binding and peptide bond formation. It has been suggested to have peptidyltransferase activity; this is somewhat controversial. Makes several contacts with the 16S rRNA in the 70S ribosome. In Magnetococcus marinus (strain ATCC BAA-1437 / JCM 17883 / MC-1), this protein is Large ribosomal subunit protein uL2.